The following is a 60-amino-acid chain: Mastoparan-VT4 (60 aa).

Positions 1–27 are cleaved as a signal peptide; the sequence is MKNPILILFTAFIALLGFFGMSAEALA. AXPX repeat units follow at residues 27 to 30, 31 to 34, 35 to 38, and 41 to 44; these read ADPK, ADPL, AGPN, and ADPE. A propeptide spanning residues 28-45 is cleaved from the precursor; it reads DPKADPLAGPNPDADPEA. At leucine 59 the chain carries Leucine amide.

Belongs to the MCD family. Mastoparan subfamily. As to expression, expressed by the venom gland.

It localises to the secreted. Its function is as follows. The synthetic peptide shows antimicrobial activities against Gram-negative bacteria (but not against all strains tested), Gram-positive bacteria (not all strains tested) and the fungi C.albicans and C.parapsilosis. Exhibits little hemolytic activity against washed human erythrocytes. This Vespa tropica (Greater banded hornet) protein is Mastoparan-VT4.